A 152-amino-acid chain; its full sequence is Protein FYV5 (152 aa).

5 helical membrane passes run 26-46, 56-76, 82-102, 106-126, and 127-147; these read IISI…RICS, LISS…SCVL, VGII…VLFL, LIDL…TPFF, and FMLH…YLII.

It is found in the cell membrane. It localises to the secreted. The protein resides in the cell wall. In terms of biological role, involved in maintaining an adequate ionic strength homeostasis of the cellular aqueous environment, necessary for normal growth rate. Required for survival upon exposure to K1 killer toxin and hence plays a role in cell wall glucan synthesis. Required for dithiothreitol (DTT) resistance. Involved in cell cycle progression. The protein is Protein FYV5 (FYV5) of Saccharomyces cerevisiae (strain ATCC 204508 / S288c) (Baker's yeast).